A 1242-amino-acid polypeptide reads, in one-letter code: Phosphorylase b kinase regulatory subunit alpha, skeletal muscle isoform (1242 aa).

Phosphoserine is present on residues S630, S731, S737, S740, S760, S813, S974, S983, and S987. The segment at 812 to 842 (LSELYVKVGEIRHWGLIRYISGILRKKVEAL) is calmodulin-binding. S1009 bears the Phosphoserine; by autocatalysis mark. S1020 carries the phosphoserine; by PKA modification. Residues S1022 and S1025 each carry the phosphoserine modification. A calmodulin-binding region spans residues 1065 to 1105 (SKDSRQGQWQRRRRLDGALNRVPIGFYQKVWKILQKCHGLS). The residue at position 1132 (S1132) is a Phosphoserine. C1239 carries S-farnesyl cysteine lipidation.

Belongs to the phosphorylase b kinase regulatory chain family. As to quaternary structure, hexadecamer of 4 heterotetramers, each composed of alpha, beta, gamma, and delta subunits. Alpha (PHKA1 or PHKA2) and beta (PHKB) are regulatory subunits, gamma (PHKG1 or PHKG2) is the catalytic subunit, and delta is calmodulin. Although the final Cys may be farnesylated, the terminal tripeptide is probably not removed, and the C-terminus is not methylated.

It is found in the cell membrane. The protein operates within glycan biosynthesis; glycogen metabolism. Its activity is regulated as follows. By phosphorylation of various serine residues and by calcium. Its function is as follows. Phosphorylase b kinase catalyzes the phosphorylation of serine in certain substrates, including troponin I. The alpha chain may bind calmodulin. In Rattus norvegicus (Rat), this protein is Phosphorylase b kinase regulatory subunit alpha, skeletal muscle isoform (Phka1).